Consider the following 225-residue polypeptide: Claudin-8 (225 aa).

Residues 1–7 are Cytoplasmic-facing; it reads MATYALQ. Residues 8-28 form a helical membrane-spanning segment; sequence MAALVLGGVGMVGTVAVTIMP. At 29–81 the chain is on the extracellular side; it reads QWRVSAFIESNIVVFENRWEGLWMNCMRHANIRMQCKVYDSLLALSPDLQASR. Residues 82 to 102 form a helical membrane-spanning segment; it reads GLMCAASVLAFLAFMTAILGM. At 103 to 117 the chain is on the cytoplasmic side; the sequence is KCTRCTGDDENVKSR. The chain crosses the membrane as a helical span at residues 118-138; it reads ILLTAGIIFFITGLVVLIPVS. Topologically, residues 139–166 are extracellular; sequence WVANSIIRDFYNPLVDVALKRELGEALY. Residues 167–187 form a helical membrane-spanning segment; it reads IGWTTALVLIAGGALFCCVFC. Topologically, residues 188–225 are cytoplasmic; sequence CTERSNSYRYSVPSHRTTQRSFHAEKRSPSIYSKSQYV. Lysine 213 participates in a covalent cross-link: Glycyl lysine isopeptide (Lys-Gly) (interchain with G-Cter in ubiquitin). An interactions with TJP1, TJP2 and TJP3 region spans residues 224–225; that stretch reads YV.

The protein belongs to the claudin family. In terms of assembly, can form heteropolymeric strands with other claudins. Interacts with CLDN4. Directly interacts with TJP1/ZO-1, TJP2/ZO-2 and TJP3/ZO-3. Interacts with KLHL3. Ubiquitinated by the BCR(KLHL3) E3 ubiquitin ligase complex in the kidney, leading to its degradation. As to expression, expressed primarily in lung and kidney. Present in both cortical and medullar collecting ducts (at protein level).

The protein resides in the cell junction. It localises to the tight junction. Its subcellular location is the cell membrane. The enzyme catalyses chloride(in) = chloride(out). It catalyses the reaction bromide(in) = bromide(out). The catalysed reaction is iodide(out) = iodide(in). It carries out the reaction fluoride(in) = fluoride(out). Can associate with other claudins to regulate tight junction structural and functional strand dynamics. May coassemble with CLDN4 into tight junction strands containing anion-selective channels that convey paracellular chloride permeability in renal collecting ducts. Cannot form tight junction strands on its own. The chain is Claudin-8 from Mus musculus (Mouse).